The sequence spans 158 residues: Low molecular weight phosphotyrosine protein phosphatase (158 aa).

Ala-2 is subject to N-acetylalanine. The active-site Nucleophile is Cys-13. Arg-19 is an active-site residue. Residue Asp-130 is the Proton donor of the active site. Phosphotyrosine occurs at positions 132 and 133.

This sequence belongs to the low molecular weight phosphotyrosine protein phosphatase family. In terms of assembly, interacts with EPHA2; dephosphorylates EPHA2. Interacts with EPHB1. As to quaternary structure, interacts with the SH3 domain of SPTAN1. There is no interaction observed for isoform 2. Post-translationally, phosphorylated by LCK. Phosphorylation at Tyr-132 increases its phosphatase activity.

Its subcellular location is the cytoplasm. It carries out the reaction O-phospho-L-tyrosyl-[protein] + H2O = L-tyrosyl-[protein] + phosphate. The catalysed reaction is a phosphate monoester + H2O = an alcohol + phosphate. Its activity is regulated as follows. Inhibited by sulfhydryl reagents. Acts on tyrosine phosphorylated proteins, low-MW aryl phosphates and natural and synthetic acyl phosphates with differences in substrate specificity between isoform 1 and isoform 2. This is Low molecular weight phosphotyrosine protein phosphatase from Rattus norvegicus (Rat).